We begin with the raw amino-acid sequence, 200 residues long: Casparian strip membrane protein 2 (200 aa).

At 1-37 (MMKSDSVAIDVPESSSVAKRKAPFMANIRDENGGYKK) the chain is on the cytoplasmic side. A helical transmembrane segment spans residues 38–58 (GLAIFDFILRLGAIAAALGAA). Over 59–88 (STMGTSDETLPFFTQFFQFNAGYDDFPTFQ) the chain is Extracellular. Residues 89–109 (FFVIAMAMVAGYLVLSLPFSI) traverse the membrane as a helical segment. At 110 to 121 (VSICRPHAAGPR) the chain is on the cytoplasmic side. Residues 122 to 142 (ILLFILDTVALTLNAAAGAAA) traverse the membrane as a helical segment. At 143-175 (ADIVYLAHNGNQTTNWLAICLQFGDFCREVSGS) the chain is on the extracellular side. Residue asparagine 153 is glycosylated (N-linked (GlcNAc...) asparagine). The helical transmembrane segment at 176-196 (VVASFASVVILMVLVVMSGLA) threads the bilayer. At 197–200 (LRRY) the chain is on the cytoplasmic side.

It belongs to the Casparian strip membrane proteins (CASP) family. As to quaternary structure, homodimer and heterodimers.

The protein resides in the cell membrane. Functionally, regulates membrane-cell wall junctions and localized cell wall deposition. Required for establishment of the Casparian strip membrane domain (CSD) and the subsequent formation of Casparian strips, a cell wall modification of the root endodermis that determines an apoplastic barrier between the intraorganismal apoplasm and the extraorganismal apoplasm and prevents lateral diffusion. This Ricinus communis (Castor bean) protein is Casparian strip membrane protein 2.